A 656-amino-acid polypeptide reads, in one-letter code: Macrolide export ATP-binding/permease protein MacB (656 aa).

The region spanning 6 to 244 is the ABC transporter domain; the sequence is LEVSACYRSF…AAPKTEVIPA (239 aa). 42 to 49 contributes to the ATP binding site; the sequence is GASGSGKS. The next 4 membrane-spanning stretches (helical) occupy residues 277 to 297, 531 to 551, 586 to 606, and 621 to 641; these read FLTM…VALG, LLIS…VMNI, LVCL…GVVF, and SIVA…FLPA.

It belongs to the ABC transporter superfamily. Macrolide exporter (TC 3.A.1.122) family. Homodimer. Part of the tripartite efflux system MacAB-TolC, which is composed of an inner membrane transporter, MacB, a periplasmic membrane fusion protein, MacA, and an outer membrane component, TolC. The complex forms a large protein conduit and can translocate molecules across both the inner and outer membranes. Interacts with MacA.

It is found in the cell inner membrane. In terms of biological role, part of the tripartite efflux system MacAB-TolC. MacB is a non-canonical ABC transporter that contains transmembrane domains (TMD), which form a pore in the inner membrane, and an ATP-binding domain (NBD), which is responsible for energy generation. Confers resistance against macrolides. This is Macrolide export ATP-binding/permease protein MacB from Shewanella sp. (strain ANA-3).